The primary structure comprises 260 residues: uncharacterized protein (260 aa).

Residues 8–166 (LALGSGGARG…VDRIPVSVVK (159 aa)) form the PNPLA domain. The short motif at 39–43 (GSSMG) is the GXSXG element. Serine 41 (nucleophile) is an active-site residue. The Proton acceptor role is filled by aspartate 153. Residues 153-155 (DGA) carry the DGA/G motif.

It belongs to the NTE family.

This is an uncharacterized protein from Bacillus subtilis (strain 168).